The primary structure comprises 195 residues: Large ribosomal subunit protein uL18 (195 aa).

It belongs to the universal ribosomal protein uL18 family. Part of the 50S ribosomal subunit. Contacts the 5S and 23S rRNAs.

In terms of biological role, this is one of the proteins that bind and probably mediate the attachment of the 5S RNA into the large ribosomal subunit, where it forms part of the central protuberance. The sequence is that of Large ribosomal subunit protein uL18 from Methanococcus vannielii.